The following is a 771-amino-acid chain: Receptor like protein 22 (771 aa).

The signal sequence occupies residues 1-20; the sequence is MSNLRLRLLSLVSILYCIAA. At 21-729 the chain is on the extracellular side; it reads LRCRPDQTET…EEEEILEWRA (709 aa). N-linked (GlcNAc...) asparagine glycans are attached at residues Asn-46, Asn-58, Asn-80, Asn-93, Asn-134, and Asn-158. LRR repeat units follow at residues 86-110, 112-135, 136-159, 160-183, 185-206, 207-230, 232-254, 255-281, 283-303, 304-327, 329-350, and 353-377; these read LSHLRYLNLSFNNFDSSPLSSAFGQ, NNLEVLLLSSNGFTGQVPSSIRNL, TKLTQLNLPHNKLTGDLPSLVQNL, TKLLALDLSYNQFSGTIPSSFFTM, FLSYLDLSENHLTGSFEISNSS, SKLENLNLGNNHFETEIIDPVLRL, NLRYLSLSFLNTSHPIDLSIFSP, LQSLTHLDLHGNSLTLTSVYSDIDFPK, MEILLLSGCNISEFPRFLKSL, KKLWYLDLSSNRIKGNVPDWIWSL, LLVSLDLSNNSFTGFNGSLDHV, and NSSVQVLDIALNSFKGSFPNPPVSI. An N-linked (GlcNAc...) asparagine glycan is attached at Asn-204. Asn-242 is a glycosylation site (N-linked (GlcNAc...) asparagine). Residue Asn-292 is glycosylated (N-linked (GlcNAc...) asparagine). Asn-337, Asn-344, Asn-353, Asn-379, Asn-384, Asn-397, Asn-410, Asn-421, Asn-466, and Asn-481 each carry an N-linked (GlcNAc...) asparagine glycan. The LRR 13; degenerate repeat unit spans residues 378-397; the sequence is INLSAWNNSFTGDIPLSVCN. 10 LRR repeats span residues 398-419, 420-443, 445-467, 469-491, 492-516, 519-543, 588-612, 613-636, 637-660, and 662-685; these read RTSLDVLDLSYNNFTGSIPPCM, GNFTIVNLRKNKLEGNIPDEFYSG, LTQTLDVGYNQLTGELPRSLLNC, FIRFLSVDHNRINDSFPLWLKAL, PNLKVLTLRSNSFHGPMSPPDDQSS, FPKLQILEISHNRFTGSLPTNYFAN, LTFYSAIDFSGNKLEGEIPESIGLL, KTLIALNLSNNSFTGHIPMSFANV, TELESLDLSGNKLSGEIPQELGRL, and YLAYIDVSDNQLTGKIPQGTQIIG. Residue Asn-543 is glycosylated (N-linked (GlcNAc...) asparagine). Residues Asn-619, Asn-622, and Asn-635 are each glycosylated (N-linked (GlcNAc...) asparagine). Residues 730-750 form a helical membrane-spanning segment; the sequence is AAIGYGPGVLFGLAIGHVVAL. At 751–771 the chain is on the cytoplasmic side; the sequence is YKPGWFIKNNGQNRLRGIRHP.

This sequence belongs to the RLP family.

Its subcellular location is the cell membrane. The polypeptide is Receptor like protein 22 (Arabidopsis thaliana (Mouse-ear cress)).